The sequence spans 162 residues: Ribonuclease (162 aa).

An N-terminal signal peptide occupies residues 1-29; it reads MKKISSVFTMFALIAAILFSGFIPQQAYA. A propeptide spanning residues 30 to 53 is cleaved from the precursor; the sequence is ETTLTPTATNKTASIQLTSDVHTL. The active-site Proton acceptor is glutamate 125. Histidine 154 acts as the Proton donor in catalysis.

The protein belongs to the ribonuclease N1/T1 family.

It is found in the secreted. Its function is as follows. This is a purine-specific ribonuclease. This is Ribonuclease from Bacillus pumilus (Bacillus mesentericus).